Consider the following 430-residue polypeptide: GTPase Obg (430 aa).

Residues 1-158 (MFVDQVKISL…LEVTLELKLL (158 aa)) enclose the Obg domain. The disordered stretch occupies residues 118–145 (RGGRGGRGNSRFATPRNPAPDFSENGEP). Residues 159–329 (ADVGLVGFPS…LLYQIADKLE (171 aa)) form the OBG-type G domain. Residues 165 to 172 (GFPSVGKS), 190 to 194 (FTTIK), 212 to 215 (DLPG), 282 to 285 (NKMD), and 310 to 312 (STI) each bind GTP. Mg(2+)-binding residues include serine 172 and threonine 192. The OCT domain maps to 352–430 (KHTPSADKFT…ILGGEFEFVE (79 aa)).

Belongs to the TRAFAC class OBG-HflX-like GTPase superfamily. OBG GTPase family. As to quaternary structure, monomer. The cofactor is Mg(2+).

Its subcellular location is the cytoplasm. In terms of biological role, an essential GTPase which binds GTP, GDP and possibly (p)ppGpp with moderate affinity, with high nucleotide exchange rates and a fairly low GTP hydrolysis rate. Plays a role in control of the cell cycle, stress response, ribosome biogenesis and in those bacteria that undergo differentiation, in morphogenesis control. This is GTPase Obg from Staphylococcus epidermidis (strain ATCC 35984 / DSM 28319 / BCRC 17069 / CCUG 31568 / BM 3577 / RP62A).